Reading from the N-terminus, the 62-residue chain is UPF0434 protein RL4569 (62 aa).

Belongs to the UPF0434 family.

The sequence is that of UPF0434 protein RL4569 from Rhizobium johnstonii (strain DSM 114642 / LMG 32736 / 3841) (Rhizobium leguminosarum bv. viciae).